The chain runs to 507 residues: Chromosomal replication initiator protein DnaA (507 aa).

A domain I, interacts with DnaA modulators region spans residues 1 to 87; that stretch reads MSVELWQQCV…IGSKRSSAPR (87 aa). The segment covering 85–110 has biased composition (low complexity); sequence APRAAPNAPLAAAQVSQAQANAAPAS. The interval 85-158 is disordered; it reads APRAAPNAPL…QQAPVRAEQR (74 aa). The tract at residues 87-170 is domain II; it reads RAAPNAPLAA…QVEGALKHTS (84 aa). The span at 126–140 shows a compositional bias: basic and acidic residues; sequence QKTEEISEEPSRDSF. The interval 171-387 is domain III, AAA+ region; sequence YLNRTFTFEN…GALKRVIAHS (217 aa). ATP-binding residues include Gly215, Gly217, Lys218, and Thr219. The interval 388–507 is domain IV, binds dsDNA; it reads HFMGRDITIE…YKNLLRTLTT (120 aa).

It belongs to the DnaA family. Oligomerizes as a right-handed, spiral filament on DNA at oriC.

The protein resides in the cytoplasm. Its function is as follows. Plays an essential role in the initiation and regulation of chromosomal replication. ATP-DnaA binds to the origin of replication (oriC) to initiate formation of the DNA replication initiation complex once per cell cycle. Binds the DnaA box (a 9 base pair repeat at the origin) and separates the double-stranded (ds)DNA. Forms a right-handed helical filament on oriC DNA; dsDNA binds to the exterior of the filament while single-stranded (ss)DNA is stabiized in the filament's interior. The ATP-DnaA-oriC complex binds and stabilizes one strand of the AT-rich DNA unwinding element (DUE), permitting loading of DNA polymerase. After initiation quickly degrades to an ADP-DnaA complex that is not apt for DNA replication. Binds acidic phospholipids. This Pseudomonas fluorescens (strain Pf0-1) protein is Chromosomal replication initiator protein DnaA.